The sequence spans 181 residues: Nucleoside-triphosphatase THEP1 (181 aa).

Residues 12-19 (GPVGSIKS) and 104-111 (VIVIDEIG) contribute to the ATP site.

This sequence belongs to the THEP1 NTPase family.

The enzyme catalyses a ribonucleoside 5'-triphosphate + H2O = a ribonucleoside 5'-diphosphate + phosphate + H(+). Its function is as follows. Has nucleotide phosphatase activity towards ATP, GTP, CTP, TTP and UTP. May hydrolyze nucleoside diphosphates with lower efficiency. This chain is Nucleoside-triphosphatase THEP1, found in Thermoplasma acidophilum (strain ATCC 25905 / DSM 1728 / JCM 9062 / NBRC 15155 / AMRC-C165).